The chain runs to 426 residues: Pyrophosphate--fructose 6-phosphate 1-phosphotransferase 2 (426 aa).

Glycine 15 contributes to the diphosphate binding site. Mg(2+) is bound at residue aspartate 114. Substrate-binding positions include 140 to 142 (TID), 186 to 188 (MGR), glutamate 247, and 308 to 311 (YELR). The Proton acceptor role is filled by aspartate 142.

Belongs to the phosphofructokinase type A (PFKA) family. PPi-dependent PFK group II subfamily. Clade 'Short' sub-subfamily. In terms of assembly, homotetramer. The cofactor is Mg(2+).

Its subcellular location is the cytoplasm. It catalyses the reaction beta-D-fructose 6-phosphate + diphosphate = beta-D-fructose 1,6-bisphosphate + phosphate + H(+). It functions in the pathway carbohydrate degradation; glycolysis; D-glyceraldehyde 3-phosphate and glycerone phosphate from D-glucose: step 3/4. Its activity is regulated as follows. Non-allosteric. Functionally, catalyzes the phosphorylation of D-fructose 6-phosphate, the first committing step of glycolysis. Uses inorganic phosphate (PPi) as phosphoryl donor instead of ATP like common ATP-dependent phosphofructokinases (ATP-PFKs), which renders the reaction reversible, and can thus function both in glycolysis and gluconeogenesis. Consistently, PPi-PFK can replace the enzymes of both the forward (ATP-PFK) and reverse (fructose-bisphosphatase (FBPase)) reactions. The chain is Pyrophosphate--fructose 6-phosphate 1-phosphotransferase 2 (pfk2) from Trichomonas vaginalis (strain ATCC PRA-98 / G3).